We begin with the raw amino-acid sequence, 336 residues long: MAAAAAGPASSQRLFQSFSDALIDGDPQAALEELTKALEQNPDDAQYYCQRAYCHILLGKYRDGIADVKKSLELNPNNCTALLRKGICEYHEKDYASALETFAEGQKLDSTDTNFDTWIKRCQEIQNGSESEVSASQRTQSKIKYDWYQTESHVIITLMIKSVQKNDVRVGFSERELSALVKIPAGEDYSLKLRLLHPIIPEQSTFKVLSTKIEIKMKKPEAVRWEKLEGQGDEPTPKQFTADVKNMYPSSSHYTRNWDKLVGEIKEEEKNEKLEGDAALNKLFQQIYSDGSDEVKRAMNKSFMESGGTVLSTNWSDVGKRKVEINPPDDMEWKQY.

An N-acetylalanine modification is found at alanine 2. 3 TPR repeats span residues 11 to 44 (SQRLFQSFSDALIDGDPQAALEELTKALEQNPDD), 45 to 78 (AQYYCQRAYCHILLGKYRDGIADVKKSLELNPNN), and 79 to 112 (CTALLRKGICEYHEKDYASALETFAEGQKLDSTD). The CS domain maps to 140-229 (QSKIKYDWYQ…PEAVRWEKLE (90 aa)). The residue at position 236 (threonine 236) is a Phosphothreonine. The region spanning 247 to 336 (MYPSSSHYTR…PPDDMEWKQY (90 aa)) is the SGS domain. Serine 252 carries the phosphoserine modification. Threonine 255 is subject to Phosphothreonine. Residue lysine 266 forms a Glycyl lysine isopeptide (Lys-Gly) (interchain with G-Cter in SUMO1); alternate linkage. Lysine 266 is covalently cross-linked (Glycyl lysine isopeptide (Lys-Gly) (interchain with G-Cter in SUMO2); alternate). Serine 302 is modified (phosphoserine).

It belongs to the SGT1 family. As to quaternary structure, probably associates with SCF (SKP1-CUL1-F-box protein) complex through interaction with SKP1. Interacts with S100A6. Interacts with HSP90. Phosphorylated at Ser-252 and Ser-302, dephosphorylation promotes nuclear translocation, most likely due to disruption of the SUGT1-HSP90 complex.

It localises to the cytoplasm. The protein localises to the nucleus. In terms of biological role, may play a role in ubiquitination and subsequent proteasomal degradation of target proteins. The chain is Protein SGT1 homolog from Mus musculus (Mouse).